Reading from the N-terminus, the 181-residue chain is Endoribonuclease YbeY (181 aa).

Zn(2+) is bound by residues H115, H119, and H125.

It belongs to the endoribonuclease YbeY family. Zn(2+) is required as a cofactor.

The protein localises to the cytoplasm. In terms of biological role, single strand-specific metallo-endoribonuclease involved in late-stage 70S ribosome quality control and in maturation of the 3' terminus of the 16S rRNA. This is Endoribonuclease YbeY from Bifidobacterium animalis subsp. lactis (strain AD011).